The chain runs to 174 residues: NADH-ubiquinone oxidoreductase chain 6 (174 aa).

The next 6 membrane-spanning stretches (helical) occupy residues 1-21 (MTYV…GFSS), 24-44 (SPIY…TIIL), 47-67 (GGGY…MVVF), 86-106 (VEVL…VLWV), 111-131 (GVVV…EGEG), and 151-171 (WLVV…IEIA).

It belongs to the complex I subunit 6 family. As to quaternary structure, core subunit of respiratory chain NADH dehydrogenase (Complex I) which is composed of 45 different subunits.

It localises to the mitochondrion inner membrane. The catalysed reaction is a ubiquinone + NADH + 5 H(+)(in) = a ubiquinol + NAD(+) + 4 H(+)(out). Core subunit of the mitochondrial membrane respiratory chain NADH dehydrogenase (Complex I) which catalyzes electron transfer from NADH through the respiratory chain, using ubiquinone as an electron acceptor. Essential for the catalytic activity and assembly of complex I. This Pan paniscus (Pygmy chimpanzee) protein is NADH-ubiquinone oxidoreductase chain 6 (MT-ND6).